The primary structure comprises 535 residues: Putative transcription activator BRLF1 homolog (535 aa).

The segment at 384 to 426 is disordered; sequence KTNFPLKRKRQSRNIDPNTPRRPRGRPKGSKTKKRPTCSPALF. The span at 404-419 shows a compositional bias: basic residues; that stretch reads RRPRGRPKGSKTKKRP.

The protein belongs to the herpesviridae TAF50 family.

Transcription activation. Regulates the delayed-early 110 kDa promoter. The sequence is that of Putative transcription activator BRLF1 homolog (50) from Saimiriine herpesvirus 2 (strain 11) (SaHV-2).